The primary structure comprises 523 residues: Transmembrane protein 266 (523 aa).

Topologically, residues 1–94 are cytoplasmic; sequence MTNPQPAIEG…VFLLSASLNS (94 aa). The helical transmembrane segment at 95 to 115 threads the bilayer; the sequence is FLVACVILVVILLTLELLIDI. Residues 116-121 are Extracellular-facing; that stretch reads KLLQFS. The helical transmembrane segment at 122-142 threads the bilayer; the sequence is SAFQFAGVIHWISLVILSVFF. Over 143–161 the chain is Cytoplasmic; that stretch reads SETVLRIVVLGIWDYIENK. A helical membrane pass occupies residues 162-182; sequence IEVFDGAVIILSLAPMVASTV. At 183 to 191 the chain is on the extracellular side; the sequence is ANGPRSPWD. Residues 192-212 traverse the membrane as a helical segment; that stretch reads AISLIIMLRIWRVKRVIDAYV. Over 213–523 the chain is Cytoplasmic; that stretch reads LPVKLEMEMV…EQKLHRVPEA (311 aa). The stretch at 218–270 forms a coiled coil; the sequence is EMEMVIQQYEKAKVIQDEQLERLTQICQEQGFEIRQLRAHLAQQDLDLAAERE. Positions 380–477 are disordered; that stretch reads SASRSSVTRA…PELEHRVSLF (98 aa). Over residues 382-397 the composition is skewed to low complexity; sequence SRSSVTRAQSDSSQTL. Residues 398–411 are compositionally biased toward polar residues; it reads GSSMDCSTAREEPS. Over residues 421–430 the composition is skewed to pro residues; that stretch reads LPSQQQVEEA.

Homodimer; disulfide-linked. As to expression, mainly expressed in the cerebellum. Also expressed in cerebral cortex, skeletal muscle and thyroid, but at much lower levels.

The protein resides in the cell membrane. The protein localises to the cell projection. It is found in the dendrite. Its subcellular location is the perikaryon. Functionally, voltage-sensor protein present on the post-synaptic side of glutamatergic mossy fibers and granule cells in the cerebellum. Despite the presence of a voltage-sensor segment, does not form a functional ion channel and its precise role remains unclear. Undergoes both rapid and slow structural rearrangements in response to changes in voltage. Contains a zinc-binding site that can regulate the slow conformational transition. In Homo sapiens (Human), this protein is Transmembrane protein 266.